Reading from the N-terminus, the 822-residue chain is Adhesion G protein-coupled receptor E2 (822 aa).

A signal peptide spans 1–18 (MGGRVFLAFCVWLTLLGA). The Extracellular segment spans residues 19–530 (ETQDSRDCAR…DVQEEDPVLT (512 aa)). The EGF-like 1 domain maps to 22–63 (DSRDCARWCPENSSCVNATACRCNPGFSSSSEIFTSPTEICD). Disulfide bonds link cysteine 26-cysteine 36, cysteine 30-cysteine 42, cysteine 44-cysteine 62, cysteine 68-cysteine 82, and cysteine 76-cysteine 91. N-linked (GlcNAc...) asparagine glycans are attached at residues asparagine 33 and asparagine 38. The region spanning 64–103 (DINECVPPSKVSCGKSSDCRNTEGSYDCVCNPGYELVSGA) is the EGF-like 1; calcium-binding domain. The N-linked (GlcNAc...) asparagine glycan is linked to asparagine 108. Residues 116–159 (DVDECQQNPRLCKSYGTCVNTLGSFTCQCLPGFKFKPEDPKLCT) form the EGF-like 2; calcium-binding domain. Cystine bridges form between cysteine 120–cysteine 133, cysteine 127–cysteine 142, cysteine 144–cysteine 158, cysteine 164–cysteine 177, and cysteine 171–cysteine 186. Residues 160 to 198 (DVNECTSGQNPCHSSTHCLNNVGSYQCRCRPGWQPIPGS) form the EGF-like 3; calcium-binding domain. Residues asparagine 203, asparagine 222, asparagine 351, asparagine 371, asparagine 427, asparagine 449, and asparagine 453 are each glycosylated (N-linked (GlcNAc...) asparagine). One can recognise an EGF-like 4; calcium-binding domain in the interval 209 to 247 (DVDECSSGLHQCDNSTVCFNTVGSYTCRCRPGWEPKHGI). 2 disulfides stabilise this stretch: cysteine 213-cysteine 226 and cysteine 220-cysteine 235. Residues 351–523 (NFSYPAGTEF…AVLMAPYDVQ (173 aa)) enclose the GAIN-B domain. 2 disulfide bridges follow: cysteine 475–cysteine 505 and cysteine 493–cysteine 507. Residues 475–523 (CVFWEHGQNGCGHWATTGCSTMDTRDTSTICRCTHLSSFAVLMAPYDVQ) form a GPS region. A helical membrane pass occupies residues 531–551 (VITYMGLSLSLLCLLLAALTF). Residues 552–562 (LLCKAIQNIST) lie on the Cytoplasmic side of the membrane. The helical transmembrane segment at 563–583 (SLHLQLSLCLLLAHLLFLVAI) threads the bilayer. Over 584–589 (DRTEHE) the chain is Extracellular. The chain crosses the membrane as a helical span at residues 590-610 (VLCAIIASALHYLYLAAFTWM). Residues 611 to 637 (LLEALYLFLTARNLMVVNYSSINRFTK) lie on the Cytoplasmic side of the membrane. A helical membrane pass occupies residues 638 to 658 (KLMFPVAYGVPAVTVAISAAS). Over 659-676 (RPHLYGTPSRCWLQPEKG) the chain is Extracellular. Residues 677–697 (FIWGFLGPVCAIFSVNLALLL) traverse the membrane as a helical segment. At 698-728 (VTLWILKNRLSSLNNEVSTLQNTRMLAFKAT) the chain is on the cytoplasmic side. The helical transmembrane segment at 729–749 (AQLFILGCTWCLGILQVGPAA) threads the bilayer. At 750–753 (RVMA) the chain is on the extracellular side. A helical membrane pass occupies residues 754–774 (YLFTIINSLQGVFIFLVYCLL). At 775–822 (SQQVREQYRKWSKGFRKLRTESEMHTLSSSAKRDTPKPSTPGLLGLQS) the chain is on the cytoplasmic side. Residues 797–822 (EMHTLSSSAKRDTPKPSTPGLLGLQS) are disordered.

The protein belongs to the G-protein coupled receptor 2 family. Adhesion G-protein coupled receptor (ADGR) subfamily. Forms a heterodimer, consisting of a large extracellular region non-covalently linked to a seven-transmembrane moiety. Interacts with chondroitin sulfate; the interaction with chondroitin sulfate is calcium-dependent. Interacts with CD55. In terms of processing, autoproteolytically cleaved into 2 subunits, an extracellular alpha subunit and a seven-transmembrane beta subunit.

The protein localises to the cell membrane. Its subcellular location is the cell projection. The protein resides in the ruffle membrane. Cell surface receptor that binds to the chondroitin sulfate moiety of glycosaminoglycan chains and promotes cell attachment. Promotes granulocyte chemotaxis, degranulation and adhesion. In macrophages, promotes the release of inflammatory cytokines, including IL8 and TNF. Signals probably through G-proteins. This Macaca mulatta (Rhesus macaque) protein is Adhesion G protein-coupled receptor E2 (ADGRE2).